A 315-amino-acid chain; its full sequence is Thymidylate synthase (315 aa).

Residues arginine 22 and 177–178 (RR) contribute to the dUMP site. Catalysis depends on cysteine 197, which acts as the Nucleophile. Residues 217-220 (RSAD), asparagine 228, and 258-260 (HLY) contribute to the dUMP site. Aspartate 220 is a binding site for (6R)-5,10-methylene-5,6,7,8-tetrahydrofolate. A (6R)-5,10-methylene-5,6,7,8-tetrahydrofolate-binding site is contributed by alanine 314.

Belongs to the thymidylate synthase family. Bacterial-type ThyA subfamily. As to quaternary structure, homodimer.

The protein resides in the cytoplasm. The catalysed reaction is dUMP + (6R)-5,10-methylene-5,6,7,8-tetrahydrofolate = 7,8-dihydrofolate + dTMP. It functions in the pathway pyrimidine metabolism; dTTP biosynthesis. Catalyzes the reductive methylation of 2'-deoxyuridine-5'-monophosphate (dUMP) to 2'-deoxythymidine-5'-monophosphate (dTMP) while utilizing 5,10-methylenetetrahydrofolate (mTHF) as the methyl donor and reductant in the reaction, yielding dihydrofolate (DHF) as a by-product. This enzymatic reaction provides an intracellular de novo source of dTMP, an essential precursor for DNA biosynthesis. The protein is Thymidylate synthase of Enterococcus faecalis (strain ATCC 700802 / V583).